Here is a 311-residue protein sequence, read N- to C-terminus: Homoserine kinase (311 aa).

89–99 (PFARGLGSSAT) lines the ATP pocket.

This sequence belongs to the GHMP kinase family. Homoserine kinase subfamily.

It localises to the cytoplasm. The enzyme catalyses L-homoserine + ATP = O-phospho-L-homoserine + ADP + H(+). It participates in amino-acid biosynthesis; L-threonine biosynthesis; L-threonine from L-aspartate: step 4/5. Functionally, catalyzes the ATP-dependent phosphorylation of L-homoserine to L-homoserine phosphate. The protein is Homoserine kinase of Halothermothrix orenii (strain H 168 / OCM 544 / DSM 9562).